A 451-amino-acid polypeptide reads, in one-letter code: Cyclin-dependent kinase 18 (451 aa).

The disordered stretch occupies residues 39 to 61 (RNEDGRDEPGQLSPGVQYQQRQN). Ser51 carries the phosphoserine modification. Residues 52-61 (PGVQYQQRQN) show a composition bias toward polar residues. 2 positions are modified to phosphoserine: Ser66 and Ser109. Positions 121-402 (YVKLDKLGEG…AEAALSHPYF (282 aa)) constitute a Protein kinase domain. Residues 127-135 (LGEGTYATV) and Lys150 contribute to the ATP site. Catalysis depends on Asp242, which acts as the Proton acceptor. Ser417 and Ser420 each carry phosphoserine.

Belongs to the protein kinase superfamily. CMGC Ser/Thr protein kinase family. CDC2/CDKX subfamily. As to expression, in brain, kidney, intestine and at a much lower level, in fetal tissues.

The enzyme catalyses L-seryl-[protein] + ATP = O-phospho-L-seryl-[protein] + ADP + H(+). The catalysed reaction is L-threonyl-[protein] + ATP = O-phospho-L-threonyl-[protein] + ADP + H(+). In terms of biological role, may play a role in signal transduction cascades in terminally differentiated cells. The chain is Cyclin-dependent kinase 18 (Cdk18) from Rattus norvegicus (Rat).